A 491-amino-acid chain; its full sequence is Anthranilate synthase component 1 (491 aa).

L-tryptophan is bound by residues S49 and 271–273; that span reads PYL. Residue 306 to 307 coordinates chorismate; sequence GT. E333 serves as a coordination point for Mg(2+). Chorismate contacts are provided by residues Y421, R441, 455-457, and G457; that span reads GAG. E470 contributes to the Mg(2+) binding site.

Belongs to the anthranilate synthase component I family. Heterotetramer consisting of two non-identical subunits: a beta subunit (TrpG) and a large alpha subunit (TrpE). It depends on Mg(2+) as a cofactor.

It catalyses the reaction chorismate + L-glutamine = anthranilate + pyruvate + L-glutamate + H(+). The protein operates within amino-acid biosynthesis; L-tryptophan biosynthesis; L-tryptophan from chorismate: step 1/5. Feedback inhibited by tryptophan. Part of a heterotetrameric complex that catalyzes the two-step biosynthesis of anthranilate, an intermediate in the biosynthesis of L-tryptophan. In the first step, the glutamine-binding beta subunit (TrpG) of anthranilate synthase (AS) provides the glutamine amidotransferase activity which generates ammonia as a substrate that, along with chorismate, is used in the second step, catalyzed by the large alpha subunit of AS (TrpE) to produce anthranilate. In the absence of TrpG, TrpE can synthesize anthranilate directly from chorismate and high concentrations of ammonia. In Neisseria meningitidis serogroup C / serotype 2a (strain ATCC 700532 / DSM 15464 / FAM18), this protein is Anthranilate synthase component 1 (trpE).